We begin with the raw amino-acid sequence, 292 residues long: Diaminopimelate epimerase (292 aa).

3 residues coordinate substrate: asparagine 13, glutamine 46, and asparagine 66. The active-site Proton donor is the cysteine 75. Substrate contacts are provided by residues 76-77, asparagine 166, asparagine 199, and 217-218; these read GN and ER. Cysteine 226 acts as the Proton acceptor in catalysis. 227–228 lines the substrate pocket; it reads GT.

Belongs to the diaminopimelate epimerase family. In terms of assembly, homodimer.

It is found in the cytoplasm. The catalysed reaction is (2S,6S)-2,6-diaminopimelate = meso-2,6-diaminopimelate. The protein operates within amino-acid biosynthesis; L-lysine biosynthesis via DAP pathway; DL-2,6-diaminopimelate from LL-2,6-diaminopimelate: step 1/1. In terms of biological role, catalyzes the stereoinversion of LL-2,6-diaminopimelate (L,L-DAP) to meso-diaminopimelate (meso-DAP), a precursor of L-lysine and an essential component of the bacterial peptidoglycan. The chain is Diaminopimelate epimerase from Ralstonia nicotianae (strain ATCC BAA-1114 / GMI1000) (Ralstonia solanacearum).